Here is a 154-residue protein sequence, read N- to C-terminus: MAARLCCQLDPARDVLCLRPVGAESCGRPLSWSPGALPPPSPPSVPADDGSHLSLRGLPACAFSSAGPCALRFTSARRMETTVNAPQSLPTTLHKRTLGLSPRSTTWIEEYIKDCVFKDWEESGEELRLKVFVLGGCRHKLVCSPAPCNFFTSA.

The segment at 68-117 is mitochondrial targeting sequence; sequence PCALRFTSARRMETTVNAPQSLPTTLHKRTLGLSPRSTTWIEEYIKDCVF.

The protein belongs to the orthohepadnavirus protein X family. May form homodimer. May interact with host CEBPA, CFLAR, CREB1, DDB1, E4F1, HBXIP, HSPD1/HSP60, NFKBIA, POLR2E and SMAD4. Interacts with host SMC5-SMC6 complex and induces its degradation. Interacts with host TRPC4AP; leading to prevent ubiquitination of TRPC4AP. Interacts with host PLSCR1; this interaction promotes ubiquitination and degradation of HBx and impairs HBx-mediated cell proliferation. In terms of processing, a fraction may be phosphorylated in insect cells and HepG2 cells, a human hepatoblastoma cell line. Phosphorylated in vitro by host protein kinase C or mitogen-activated protein kinase. N-acetylated in insect cells.

Its subcellular location is the host cytoplasm. The protein localises to the host nucleus. The protein resides in the host mitochondrion. In terms of biological role, multifunctional protein that plays a role in silencing host antiviral defenses and promoting viral transcription. Does not seem to be essential for HBV infection. May be directly involved in development of cirrhosis and liver cancer (hepatocellular carcinoma). Most of cytosolic activities involve modulation of cytosolic calcium. The effect on apoptosis is controversial depending on the cell types in which the studies have been conducted. May induce apoptosis by localizing in mitochondria and causing loss of mitochondrial membrane potential. May also modulate apoptosis by binding host CFLAR, a key regulator of the death-inducing signaling complex (DISC). Promotes viral transcription by using the host E3 ubiquitin ligase DDB1 to target the SMC5-SMC6 complex to proteasomal degradation. This host complex would otherwise bind to viral episomal DNA, and prevents its transcription. Moderately stimulates transcription of many different viral and cellular transcription elements. Promoters and enhancers stimulated by HBx contain DNA binding sites for NF-kappa-B, AP-1, AP-2, c-EBP, ATF/CREB, or the calcium-activated factor NF-AT. The sequence is that of Protein X from Hepatitis B virus genotype H subtype adw4 (isolate Nicaragua/2928Nic/1997) (HBV-H).